Here is a 237-residue protein sequence, read N- to C-terminus: Putative N-acetylmuramoyl-L-alanine amidase (237 aa).

The MurNAc-LAA domain maps to 7 to 225; the sequence is ILIDAGHGGY…IANSIYLGLK (219 aa).

This sequence belongs to the N-acetylmuramoyl-L-alanine amidase 3 family.

It localises to the secreted. It catalyses the reaction Hydrolyzes the link between N-acetylmuramoyl residues and L-amino acid residues in certain cell-wall glycopeptides.. Its function is as follows. Cell-wall hydrolase involved in septum cleavage during cell division. This Buchnera aphidicola subsp. Acyrthosiphon pisum (strain APS) (Acyrthosiphon pisum symbiotic bacterium) protein is Putative N-acetylmuramoyl-L-alanine amidase (amiB).